The chain runs to 748 residues: Protein REPRESSOR OF SILENCING 3 (748 aa).

The region spanning 10-86 (VRLHVGGLGE…GRLRLEKAKE (77 aa)) is the RRM domain. Disordered stretches follow at residues 244–318 (KSIL…QSID), 350–531 (GSSK…VSDT), 579–600 (VDEEEAGKGPLKASNKSTGGSS), and 729–748 (EWAKAKKALSEPRRKKNSEE). The span at 266–288 (THPSKNRQTISLEETGRQESSQA) shows a compositional bias: polar residues. The span at 294-314 (KPSEVVPDKSSDEPSRTKDLE) shows a compositional bias: basic and acidic residues. Residues 373–382 (LKKKTKRKRV) show a composition bias toward basic residues. Acidic residues-rich tracts occupy residues 403-416 (DTMADDIERDDSDA), 439-472 (DDSDAVEDDTAIDSMADDPASDSVAESDDGDAVE), and 491-518 (ESDDGDNVEDDTAIDSMCDDTANDDVGS). The span at 520-531 (DSGSLADTVSDT) shows a compositional bias: polar residues.

In terms of tissue distribution, ubiquitously expressed.

The protein localises to the nucleus. Its subcellular location is the nucleolus. The protein resides in the nucleoplasm. Functionally, RNA-binding protein required for DNA demethylation and to eluviate siRNA-mediated transcriptional gene silencing (TGS), probably by guiding ROS1. Can bind specifically single stranded G-rich RNAs of 21-, 24- or 26-nt corresponding to promoter sequence of target genes; this interaction directs demethylation of target sequences. This Arabidopsis thaliana (Mouse-ear cress) protein is Protein REPRESSOR OF SILENCING 3.